The sequence spans 172 residues: MAAPGPRALRAALCGGCCCLLLCAQLVLAGKGARGFGRGALLRLNVWPTTQGGCKHLGHCEHCVDRAHNFSICVWQQCGPEEPGHCVAQAEVVKEGCSIYNHSESCPASHHHSTEEPKPSTTGSPPIPEDHSPGFDGASFIGGIVLVLSLQATAFFVLRFLKAKDSTYQTLI.

The signal sequence occupies residues 1 to 29 (MAAPGPRALRAALCGGCCCLLLCAQLVLA). Residues 30 to 137 (GKGARGFGRG…PEDHSPGFDG (108 aa)) lie on the Extracellular side of the membrane. Residues asparagine 69 and asparagine 101 are each glycosylated (N-linked (GlcNAc...) asparagine). Residues 108–132 (ASHHHSTEEPKPSTTGSPPIPEDHS) form a disordered region. Residues 138 to 158 (ASFIGGIVLVLSLQATAFFVL) traverse the membrane as a helical segment. Residues 159–172 (RFLKAKDSTYQTLI) are Cytoplasmic-facing.

It belongs to the CD164 family.

It is found in the membrane. The protein is CD164 sialomucin-like 2 protein (Cd164l2) of Mus musculus (Mouse).